The primary structure comprises 210 residues: Pyridoxine/pyridoxamine 5'-phosphate oxidase (210 aa).

Substrate-binding positions include 7–10 and lysine 65; that span reads RDEY. FMN-binding positions include 60–65, 75–76, arginine 81, lysine 82, and glutamine 104; these read RMVLLK and FT. Substrate-binding residues include tyrosine 122, arginine 126, and serine 130. Residues 139 to 140 and tryptophan 183 contribute to the FMN site; that span reads QS. Residue 189–191 participates in substrate binding; that stretch reads RLH. Arginine 193 contributes to the FMN binding site.

It belongs to the pyridoxamine 5'-phosphate oxidase family. In terms of assembly, homodimer. It depends on FMN as a cofactor.

It catalyses the reaction pyridoxamine 5'-phosphate + O2 + H2O = pyridoxal 5'-phosphate + H2O2 + NH4(+). The catalysed reaction is pyridoxine 5'-phosphate + O2 = pyridoxal 5'-phosphate + H2O2. Its pathway is cofactor metabolism; pyridoxal 5'-phosphate salvage; pyridoxal 5'-phosphate from pyridoxamine 5'-phosphate: step 1/1. It participates in cofactor metabolism; pyridoxal 5'-phosphate salvage; pyridoxal 5'-phosphate from pyridoxine 5'-phosphate: step 1/1. Its function is as follows. Catalyzes the oxidation of either pyridoxine 5'-phosphate (PNP) or pyridoxamine 5'-phosphate (PMP) into pyridoxal 5'-phosphate (PLP). This Haemophilus influenzae (strain ATCC 51907 / DSM 11121 / KW20 / Rd) protein is Pyridoxine/pyridoxamine 5'-phosphate oxidase.